A 226-amino-acid chain; its full sequence is MTLAARLKQEFVSGWKPFEVVWLALFIIAQIWAYVQTPDSWLAMISGISGILCVVLVSKGKISNYFFGLIFAYTYFYVAWGSNFLGEMNTVLYVYLPSQFIGYFMWKANMQNSDGGESVIAKALTVKGWMTLIVVTTVGTLLFVQALQAAGGSSTGLDGLTTIITVAAQILMILRYREQWLLWIGLNILSIFLWAETPAIYLMYSAYLLNSLYGYYNWTKLVKRTN.

Residues 1 to 14 lie on the Cytoplasmic side of the membrane; that stretch reads MTLAARLKQEFVSG. Residues 15–35 traverse the membrane as a helical segment; the sequence is WKPFEVVWLALFIIAQIWAYV. A topological domain (periplasmic) is located at residue Gln-36. The helical transmembrane segment at 37 to 57 threads the bilayer; the sequence is TPDSWLAMISGISGILCVVLV. Over 58–65 the chain is Cytoplasmic; the sequence is SKGKISNY. Residues 66 to 86 form a helical membrane-spanning segment; that stretch reads FFGLIFAYTYFYVAWGSNFLG. The Periplasmic portion of the chain corresponds to 87-90; sequence EMNT. The chain crosses the membrane as a helical span at residues 91–110; that stretch reads VLYVYLPSQFIGYFMWKANM. At 111–123 the chain is on the cytoplasmic side; sequence QNSDGGESVIAKA. Residues 124 to 144 traverse the membrane as a helical segment; it reads LTVKGWMTLIVVTTVGTLLFV. The Periplasmic portion of the chain corresponds to 145 to 153; sequence QALQAAGGS. Residues 154–174 traverse the membrane as a helical segment; it reads STGLDGLTTIITVAAQILMIL. Residues 175-179 lie on the Cytoplasmic side of the membrane; that stretch reads RYREQ. A helical transmembrane segment spans residues 180 to 200; it reads WLLWIGLNILSIFLWAETPAI. 2 residues coordinate beta-nicotinamide D-riboside: Trp-183 and Asn-187. Over 201–202 the chain is Periplasmic; sequence YL. The chain crosses the membrane as a helical span at residues 203–223; that stretch reads MYSAYLLNSLYGYYNWTKLVK. Topologically, residues 224–226 are cytoplasmic; it reads RTN.

It belongs to the nicotinamide ribonucleoside (NR) uptake permease (TC 4.B.1) family.

It is found in the cell inner membrane. Required for nicotinamide riboside transport across the inner membrane. The sequence is that of Nicotinamide riboside transporter PnuC (pnuC) from Haemophilus influenzae (strain ATCC 51907 / DSM 11121 / KW20 / Rd).